The primary structure comprises 212 residues: ATP-dependent Clp protease proteolytic subunit (212 aa).

The active-site Nucleophile is the S107. H132 is a catalytic residue.

Belongs to the peptidase S14 family. As to quaternary structure, fourteen ClpP subunits assemble into 2 heptameric rings which stack back to back to give a disk-like structure with a central cavity, resembling the structure of eukaryotic proteasomes.

It is found in the cytoplasm. The enzyme catalyses Hydrolysis of proteins to small peptides in the presence of ATP and magnesium. alpha-casein is the usual test substrate. In the absence of ATP, only oligopeptides shorter than five residues are hydrolyzed (such as succinyl-Leu-Tyr-|-NHMec, and Leu-Tyr-Leu-|-Tyr-Trp, in which cleavage of the -Tyr-|-Leu- and -Tyr-|-Trp bonds also occurs).. Cleaves peptides in various proteins in a process that requires ATP hydrolysis. Has a chymotrypsin-like activity. Plays a major role in the degradation of misfolded proteins. The protein is ATP-dependent Clp protease proteolytic subunit of Pseudoalteromonas atlantica (strain T6c / ATCC BAA-1087).